Consider the following 363-residue polypeptide: Sulfate/thiosulfate import ATP-binding protein CysA (363 aa).

The region spanning 3–237 is the ABC transporter domain; that stretch reads IEINNISKYF…PATRFVLEFL (235 aa). Residue 35-42 coordinates ATP; sequence GPSGSGKT.

Belongs to the ABC transporter superfamily. Sulfate/tungstate importer (TC 3.A.1.6) family. As to quaternary structure, the complex is composed of two ATP-binding proteins (CysA), two transmembrane proteins (CysT and CysW) and a solute-binding protein (CysP).

It is found in the cell inner membrane. The catalysed reaction is sulfate(out) + ATP + H2O = sulfate(in) + ADP + phosphate + H(+). It carries out the reaction thiosulfate(out) + ATP + H2O = thiosulfate(in) + ADP + phosphate + H(+). Its function is as follows. Part of the ABC transporter complex CysAWTP involved in sulfate/thiosulfate import. Responsible for energy coupling to the transport system. The polypeptide is Sulfate/thiosulfate import ATP-binding protein CysA (Yersinia pseudotuberculosis serotype I (strain IP32953)).